A 191-amino-acid polypeptide reads, in one-letter code: MSQSPPERFILLDGIRGVAALFIVHRHAEQFFGRDPASSYLAVDLFFALSGFVLAHAYGKKLYEGTITPGFFLKARFARLYPLYVLALALMAAYFICLYVLGLPTPIDDLHRLIDPGELAFALVTGLLFLPAPFTLTLNGALFLVSPAWSLFNELVVNAVYARWGARATMKQTVLVLAVSAVVLMVAAAEF.

It belongs to the acyltransferase 3 family.

The protein localises to the cell membrane. Seems to regulate the surface properties of the bacterium in the presence of plant cells or plant cell extracts. The sequence is that of Protein 2 in picA locus from Rhizobium radiobacter (Agrobacterium tumefaciens).